The sequence spans 364 residues: FMNH(2)-dependent dimethylsulfone monooxygenase (364 aa).

It belongs to the SsuD family.

The enzyme catalyses dimethyl sulfone + FMNH2 + O2 = methanesulfinate + FMN + formaldehyde + H2O + 2 H(+). In terms of biological role, involved in the dimethyl sulfide degradation pathway. Catalyzes the oxidation of dimethylsulfone (DMSO2) to yield methanesulfinate, which is oxidized spontaneously to methanesulfonate in the presence of dioxygen and FMNH(2). The chain is FMNH(2)-dependent dimethylsulfone monooxygenase from Pseudomonas fluorescens (strain Pf0-1).